A 344-amino-acid chain; its full sequence is uncharacterized protein (344 aa).

A disordered region spans residues Ala-304–Pro-344. Positions Thr-323–Arg-336 are enriched in basic and acidic residues.

This is an uncharacterized protein from Mycobacterium tuberculosis (strain CDC 1551 / Oshkosh).